A 330-amino-acid chain; its full sequence is Malate dehydrogenase (330 aa).

An NAD(+)-binding site is contributed by 13 to 19 (GAAGQIG). Residues Arg-94 and Arg-100 each contribute to the substrate site. NAD(+)-binding positions include Asn-107, Gln-114, and 131–133 (VGN). Asn-133 and Arg-164 together coordinate substrate. His-189 (proton acceptor) is an active-site residue.

This sequence belongs to the LDH/MDH superfamily. MDH type 2 family.

It catalyses the reaction (S)-malate + NAD(+) = oxaloacetate + NADH + H(+). Catalyzes the reversible oxidation of malate to oxaloacetate. The chain is Malate dehydrogenase from Deinococcus radiodurans (strain ATCC 13939 / DSM 20539 / JCM 16871 / CCUG 27074 / LMG 4051 / NBRC 15346 / NCIMB 9279 / VKM B-1422 / R1).